The sequence spans 159 residues: Large ribosomal subunit protein uL11 (159 aa).

The span at E137–D149 shows a compositional bias: basic and acidic residues. The interval E137–G159 is disordered.

It belongs to the universal ribosomal protein uL11 family. As to quaternary structure, part of the ribosomal stalk of the 50S ribosomal subunit. Interacts with L10 and the large rRNA to form the base of the stalk. L10 forms an elongated spine to which L12 dimers bind in a sequential fashion forming a multimeric L10(L12)X complex.

Functionally, forms part of the ribosomal stalk which helps the ribosome interact with GTP-bound translation factors. This Korarchaeum cryptofilum (strain OPF8) protein is Large ribosomal subunit protein uL11.